The following is an 80-amino-acid chain: Small ribosomal subunit protein bS18 (80 aa).

The protein belongs to the bacterial ribosomal protein bS18 family. Part of the 30S ribosomal subunit. Forms a tight heterodimer with protein bS6.

Binds as a heterodimer with protein bS6 to the central domain of the 16S rRNA, where it helps stabilize the platform of the 30S subunit. This Staphylococcus haemolyticus (strain JCSC1435) protein is Small ribosomal subunit protein bS18.